Consider the following 190-residue polypeptide: Elongation factor P 1 (190 aa).

It belongs to the elongation factor P family.

The protein resides in the cytoplasm. It participates in protein biosynthesis; polypeptide chain elongation. Its function is as follows. Involved in peptide bond synthesis. Stimulates efficient translation and peptide-bond synthesis on native or reconstituted 70S ribosomes in vitro. Probably functions indirectly by altering the affinity of the ribosome for aminoacyl-tRNA, thus increasing their reactivity as acceptors for peptidyl transferase. In Lactobacillus johnsonii (strain CNCM I-12250 / La1 / NCC 533), this protein is Elongation factor P 1 (efp1).